The sequence spans 605 residues: Isocitrate dehydrogenase kinase/phosphatase (605 aa).

ATP-binding positions include 327–333 and K348; that span reads APGIKGL. D383 is a catalytic residue.

Belongs to the AceK family.

The protein localises to the cytoplasm. It catalyses the reaction L-seryl-[isocitrate dehydrogenase] + ATP = O-phospho-L-seryl-[isocitrate dehydrogenase] + ADP + H(+). Bifunctional enzyme which can phosphorylate or dephosphorylate isocitrate dehydrogenase (IDH) on a specific serine residue. This is a regulatory mechanism which enables bacteria to bypass the Krebs cycle via the glyoxylate shunt in response to the source of carbon. When bacteria are grown on glucose, IDH is fully active and unphosphorylated, but when grown on acetate or ethanol, the activity of IDH declines drastically concomitant with its phosphorylation. This chain is Isocitrate dehydrogenase kinase/phosphatase, found in Burkholderia orbicola (strain MC0-3).